A 204-amino-acid chain; its full sequence is Twist-related protein 1 (204 aa).

Positions 1-18 are enriched in low complexity; it reads MMQDVSSSPVSPADDSLS. The disordered stretch occupies residues 1–107; the sequence is MMQDVSSSPV…GGGSPQSYEE (107 aa). Basic residues predominate over residues 34-43; it reads RGGRKRRSSR. Composition is skewed to gly residues over residues 46 to 65 and 80 to 101; these read AGGG…GGDE and GCGG…GGGS. In terms of domain architecture, bHLH spans 110–161; sequence TQRVMANVRERQRTQSLNEAFAALRKIIPTLPSDKLSKIQTLKLAARYIDFL. The interval 163–193 is sufficient for transactivation activity; the sequence is QVLQSDELDSKMASCSYVAHERFSYAFSVWR.

As to quaternary structure, efficient DNA binding requires dimerization with another bHLH protein. Homodimer or heterodimer with E proteins such as TCF3. ID1 binds preferentially to TCF3 but does not interact efficiently with TWIST1 so ID1 levels control the amount of TCF3 available to dimerize with TWIST and thus determine the type of dimer formed.

The protein localises to the nucleus. Its function is as follows. Acts as a transcriptional regulator. Inhibits myogenesis by sequestrating E proteins, inhibiting trans-activation by MEF2, and inhibiting DNA-binding by MYOD1 through physical interaction. This interaction probably involves the basic domains of both proteins. Also represses expression of pro-inflammatory cytokines such as TNFA and IL1B. Regulates cranial suture patterning and fusion. Activates transcription as a heterodimer with E proteins. Regulates gene expression differentially, depending on dimer composition. Homodimers induce expression of FGFR2 and POSTN while heterodimers repress FGFR2 and POSTN expression and induce THBS1 expression. Heterodimerization is also required for osteoblast differentiation. Represses the activity of the circadian transcriptional activator: NPAS2-BMAL1 heterodimer. This is Twist-related protein 1 (TWIST1) from Nomascus concolor (Black crested gibbon).